The sequence spans 324 residues: Dolichyl-phosphate beta-glucosyltransferase (324 aa).

Residues 1–7 (MAPLLLQ) lie on the Lumenal side of the membrane. Residues 8 to 28 (LAVLGAALAAAALVLISIVAF) traverse the membrane as a helical; Signal-anchor for type II membrane protein segment. At 29–324 (TTATKMPALH…WRLEQTRKMN (296 aa)) the chain is on the cytoplasmic side.

Belongs to the glycosyltransferase 2 family. In terms of tissue distribution, expressed in pancreas, placenta, liver, heart, brain, kidney, skeletal muscle, and lung.

Its subcellular location is the endoplasmic reticulum membrane. The enzyme catalyses a di-trans,poly-cis-dolichyl phosphate + UDP-alpha-D-glucose = a di-trans,poly-cis-dolichyl beta-D-glucosyl phosphate + UDP. It functions in the pathway protein modification; protein glycosylation. In terms of biological role, dolichyl-phosphate beta-glucosyltransferase that operates in the biosynthetic pathway of dolichol-linked oligosaccharides, the glycan precursors employed in protein asparagine (N)-glycosylation. The assembly of dolichol-linked oligosaccharides begins on the cytosolic side of the endoplasmic reticulum membrane and finishes in its lumen. The sequential addition of sugars to dolichol pyrophosphate produces dolichol-linked oligosaccharides containing fourteen sugars, including two GlcNAcs, nine mannoses and three glucoses. Once assembled, the oligosaccharide is transferred from the lipid to nascent proteins by oligosaccharyltransferases. Dolichyl-phosphate beta-glucosyltransferase produces dolichyl beta-D-glucosyl phosphate/Dol-P-Glc, the glucose donor substrate used sequentially by ALG6, ALG8 and ALG10 to add glucose residues on top of the Man(9)GlcNAc(2)-PP-Dol structure. These are the three last steps in the biosynthetic pathway of dolichol-linked oligosaccharides to produce Glc(3)Man(9)GlcNAc(2)-PP-Dol. The enzyme is most probably active on the cytoplasmic side of the endoplasmic reticulum while its product Dol-P-Glc is the substrate for ALG6, ALG8 and ALG11 in the lumen of the endoplasmic reticulum. The protein is Dolichyl-phosphate beta-glucosyltransferase of Homo sapiens (Human).